The sequence spans 169 residues: ATP synthase subunit b (169 aa).

The chain crosses the membrane as a helical span at residues 3 to 23 (IKILLLVLPFFAFASEHGGVN).

This sequence belongs to the ATPase B chain family. As to quaternary structure, F-type ATPases have 2 components, F(1) - the catalytic core - and F(0) - the membrane proton channel. F(1) has five subunits: alpha(3), beta(3), gamma(1), delta(1), epsilon(1). F(0) has three main subunits: a(1), b(2) and c(10-14). The alpha and beta chains form an alternating ring which encloses part of the gamma chain. F(1) is attached to F(0) by a central stalk formed by the gamma and epsilon chains, while a peripheral stalk is formed by the delta and b chains.

It is found in the cell inner membrane. Functionally, f(1)F(0) ATP synthase produces ATP from ADP in the presence of a proton or sodium gradient. F-type ATPases consist of two structural domains, F(1) containing the extramembraneous catalytic core and F(0) containing the membrane proton channel, linked together by a central stalk and a peripheral stalk. During catalysis, ATP synthesis in the catalytic domain of F(1) is coupled via a rotary mechanism of the central stalk subunits to proton translocation. Its function is as follows. Component of the F(0) channel, it forms part of the peripheral stalk, linking F(1) to F(0). In Campylobacter curvus (strain 525.92), this protein is ATP synthase subunit b.